The primary structure comprises 459 residues: MKSVEQYRNQKVLVLGLAKSGVNAARLLHKLGAFVTVNDKKKFDENPDAQELLSDGIKVITGGHPLSLLDEDFKVVVKNPGIPYSNPIVSGAQEKGIPVITEVELASQILAGELIGVTGTNGKTTTTTMITMMLNQRTNAGKAYVAGNIGVPASAIAQKATAADTMVTELSSFMLCGIQTLHPHIAVITNIYSTHLDYHGSRENYVKAKMRITMNQTANDYLVINWDSEEWRQLSKQSQATVVPFSRQANTKDGAYEEAGKLYFKDEYIMDAADIRIPGDHNVENALAAIAVAKLQAVPTAGIVQVLKTFTGVRHRTQYVETYQDRQFYNDSKATNLVSTEMALKGFDQPVILLAGGLDRGNTFEKLAPALKAHVKTLIVFGETAEKMADAGRLAGIQDIEFTDNCETAVPIAWQHSQAGDIIMLSPACASWDQYPNFEVRGDRFIKAIEQLTGKAEEN.

119 to 125 contacts ATP; sequence GTNGKTT.

The protein belongs to the MurCDEF family.

Its subcellular location is the cytoplasm. It catalyses the reaction UDP-N-acetyl-alpha-D-muramoyl-L-alanine + D-glutamate + ATP = UDP-N-acetyl-alpha-D-muramoyl-L-alanyl-D-glutamate + ADP + phosphate + H(+). It participates in cell wall biogenesis; peptidoglycan biosynthesis. Cell wall formation. Catalyzes the addition of glutamate to the nucleotide precursor UDP-N-acetylmuramoyl-L-alanine (UMA). The sequence is that of UDP-N-acetylmuramoylalanine--D-glutamate ligase from Lactiplantibacillus plantarum (strain ATCC BAA-793 / NCIMB 8826 / WCFS1) (Lactobacillus plantarum).